Reading from the N-terminus, the 512-residue chain is Citrate synthase (512 aa).

Catalysis depends on residues histidine 288, histidine 327, and aspartate 383. The tract at residues 483–512 (AIPKTATGSKSQLSASIEQSFGEKISPQSH) is disordered. A compositionally biased stretch (polar residues) spans 488–501 (ATGSKSQLSASIEQ).

It belongs to the citrate synthase family.

It is found in the cytoplasm. It catalyses the reaction oxaloacetate + acetyl-CoA + H2O = citrate + CoA + H(+). It functions in the pathway carbohydrate metabolism; tricarboxylic acid cycle; isocitrate from oxaloacetate: step 1/2. The polypeptide is Citrate synthase (gltA) (Dictyostelium discoideum (Social amoeba)).